We begin with the raw amino-acid sequence, 794 residues long: Protein SEY1 (794 aa).

At 1–687 (MMEVIDSVLG…KRSIIKTTTA (687 aa)) the chain is on the cytoplasmic side. One can recognise a GB1/RHD3-type G domain in the interval 43 to 272 (GLDYHVISVF…ANPYYFKPQY (230 aa)). Residue 53-60 (GSQSSGKS) participates in GTP binding. Residues 331 to 352 (VDHILDDREKLGEVLKNLKQEC) are a coiled coil. Residues 688-708 (IPIWMYLLVVALGWNEFVMVL) form a helical membrane-spanning segment. Residues 709–711 (RNP) lie on the Lumenal side of the membrane. The helical transmembrane segment at 712–732 (LLVTLVLLFGVGFIFVNKFGL) threads the bilayer. At 733 to 794 (WGPVLNVAHN…SDNEKIEKSE (62 aa)) the chain is on the cytoplasmic side. Residues 770–794 (NSAGKESYEMKDMSDSDNEKIEKSE) are disordered. Residues 775–794 (ESYEMKDMSDSDNEKIEKSE) show a composition bias toward basic and acidic residues.

The protein belongs to the TRAFAC class dynamin-like GTPase superfamily. GB1/RHD3 GTPase family. RHD3 subfamily.

Its subcellular location is the endoplasmic reticulum membrane. In terms of biological role, cooperates with the reticulon proteins and tubule-shaping DP1 family proteins to generate and maintain the structure of the tubular endoplasmic reticulum network. Has GTPase activity, which is required for its function in ER organization. The protein is Protein SEY1 of Zygosaccharomyces rouxii (strain ATCC 2623 / CBS 732 / NBRC 1130 / NCYC 568 / NRRL Y-229).